The chain runs to 303 residues: WD repeat-containing protein 38 (303 aa).

7 WD repeats span residues 24-63 (QHHGEVNCSAFSPDGRTLLTASDDGCVYVWGTKSGRLLWR), 66-105 (GHRGPVKSCCFSPDGRLIASSSSDHSIRLWDVARSKCLHV), 108-147 (GHQRSVETVSFSPDSKQLASGGWDKRAIVWEVQSGRRVHL), 150-189 (GHCDSIQSSDFSPTSDSLATGSWDSTVHIWDLRASTPVVS), 195-233 (GHTGNISCLCYSASGLLASGSWDKTICVWKPTTNNLPLQ), 236-277 (GHTI…ETLK), and 279-303 (MLDVAHACIFTPDGKLLVSGAAVTR).

This chain is WD repeat-containing protein 38 (Wdr38), found in Mus musculus (Mouse).